We begin with the raw amino-acid sequence, 963 residues long: Iron-responsive element-binding protein 2 (963 aa).

Residues C512, C578, and C581 each contribute to the [4Fe-4S] cluster site.

The protein belongs to the aconitase/IPM isomerase family. Interacts with RBCK1 only in iron-rich conditions. Interacts (when associated with the 4Fe-4S) with FBXL5. Interacts with CIAO1 and CIAO2A. [4Fe-4S] cluster is required as a cofactor. Ubiquitinated and degraded by the proteasome in presence of high level of iron and oxygen. Ubiquitinated by a SCF complex containing FBXL5. Upon iron and oxygen depletion FBXL5 is degraded, preventing ubiquitination and allowing its RNA-binding activity. As to expression, ubiquitously expressed in rat tissues, the highest amounts present in skeletal muscle and heart.

It localises to the cytoplasm. In terms of biological role, RNA-binding protein that binds to iron-responsive elements (IRES), which are stem-loop structures found in the 5'-UTR of ferritin, and delta aminolevulinic acid synthase mRNAs, and in the 3'-UTR of transferrin receptor mRNA. Binding to the IRE element in ferritin results in the repression of its mRNA translation. Binding of the protein to the transferrin receptor mRNA inhibits the degradation of this otherwise rapidly degraded mRNA. This is Iron-responsive element-binding protein 2 (Ireb2) from Rattus norvegicus (Rat).